A 128-amino-acid polypeptide reads, in one-letter code: Ribosome-binding factor A (128 aa).

Belongs to the RbfA family. Monomer. Binds 30S ribosomal subunits, but not 50S ribosomal subunits or 70S ribosomes.

The protein localises to the cytoplasm. Its function is as follows. One of several proteins that assist in the late maturation steps of the functional core of the 30S ribosomal subunit. Associates with free 30S ribosomal subunits (but not with 30S subunits that are part of 70S ribosomes or polysomes). Required for efficient processing of 16S rRNA. May interact with the 5'-terminal helix region of 16S rRNA. This Haemophilus influenzae (strain 86-028NP) protein is Ribosome-binding factor A.